A 331-amino-acid polypeptide reads, in one-letter code: Pantothenate kinase (331 aa).

109-116 (GSVAVGKS) is a binding site for ATP.

This sequence belongs to the prokaryotic pantothenate kinase family.

The protein localises to the cytoplasm. It carries out the reaction (R)-pantothenate + ATP = (R)-4'-phosphopantothenate + ADP + H(+). Its pathway is cofactor biosynthesis; coenzyme A biosynthesis; CoA from (R)-pantothenate: step 1/5. This is Pantothenate kinase from Rhizobium meliloti (strain 1021) (Ensifer meliloti).